Here is a 258-residue protein sequence, read N- to C-terminus: Malonyl-[acyl-carrier protein] O-methyltransferase (258 aa).

It belongs to the methyltransferase superfamily.

The catalysed reaction is malonyl-[ACP] + S-adenosyl-L-methionine = malonyl-[ACP] methyl ester + S-adenosyl-L-homocysteine. Its pathway is cofactor biosynthesis; biotin biosynthesis. Its function is as follows. Converts the free carboxyl group of a malonyl-thioester to its methyl ester by transfer of a methyl group from S-adenosyl-L-methionine (SAM). It allows to synthesize pimeloyl-ACP via the fatty acid synthetic pathway. The chain is Malonyl-[acyl-carrier protein] O-methyltransferase from Hamiltonella defensa subsp. Acyrthosiphon pisum (strain 5AT).